A 521-amino-acid polypeptide reads, in one-letter code: Bifunctional dihydrofolate reductase-thymidylate synthase (521 aa).

The region spanning 17-194 (NYQVVVAGTR…IRHSFVSFVR (178 aa)) is the DHFR domain. Val-21 serves as a coordination point for substrate. NADP(+) is bound by residues Ala-23 and 29-35 (GIGKDGV). Asp-43 lines the substrate pocket. Residues 67-69 (RKT) and 88-91 (LTRS) contribute to the NADP(+) site. Ile-130 is a binding site for substrate. 131–138 (GGGQVLRE) lines the NADP(+) pocket. Thr-151 is a substrate binding site. A thymidylate synthase region spans residues 197–521 (KSVAETHESN…HQKIEMKMAV (325 aa)). DUMP is bound at residue Arg-258. The active site involves Cys-403. DUMP-binding positions include His-404, 422–426 (QRSAD), Asn-434, and 464–466 (HVY).

The protein in the N-terminal section; belongs to the dihydrofolate reductase family. In the C-terminal section; belongs to the thymidylate synthase family.

The catalysed reaction is (6S)-5,6,7,8-tetrahydrofolate + NADP(+) = 7,8-dihydrofolate + NADPH + H(+). It carries out the reaction dUMP + (6R)-5,10-methylene-5,6,7,8-tetrahydrofolate = 7,8-dihydrofolate + dTMP. It participates in cofactor biosynthesis; tetrahydrofolate biosynthesis; 5,6,7,8-tetrahydrofolate from 7,8-dihydrofolate: step 1/1. Its function is as follows. Bifunctional enzyme. Involved in de novo dTMP biosynthesis. Key enzyme in folate metabolism. Can play two different roles depending on the source of dihydrofolate: de novo synthesis of tetrahydrofolate or recycling of the dihydrofolate released as one of the end products of the TS catalyzed reaction. Catalyzes an essential reaction for de novo glycine and purine synthesis, DNA precursor synthesis, and for the conversion of dUMP to dTMP. This Zea mays (Maize) protein is Bifunctional dihydrofolate reductase-thymidylate synthase (DRTS).